We begin with the raw amino-acid sequence, 610 residues long: Elongation factor 4 (610 aa).

In terms of domain architecture, tr-type G spans 13 to 195; it reads SHIRNFSIVA…AIVHKLPAPK (183 aa). Residues 25–30 and 142–145 each bind GTP; these read DHGKST and NKID.

It belongs to the TRAFAC class translation factor GTPase superfamily. Classic translation factor GTPase family. LepA subfamily.

It is found in the cell inner membrane. It carries out the reaction GTP + H2O = GDP + phosphate + H(+). Its function is as follows. Required for accurate and efficient protein synthesis under certain stress conditions. May act as a fidelity factor of the translation reaction, by catalyzing a one-codon backward translocation of tRNAs on improperly translocated ribosomes. Back-translocation proceeds from a post-translocation (POST) complex to a pre-translocation (PRE) complex, thus giving elongation factor G a second chance to translocate the tRNAs correctly. Binds to ribosomes in a GTP-dependent manner. This chain is Elongation factor 4, found in Rhizobium johnstonii (strain DSM 114642 / LMG 32736 / 3841) (Rhizobium leguminosarum bv. viciae).